The primary structure comprises 1657 residues: Alsin (1657 aa).

RCC1 repeat units lie at residues 59–108 (DGEV…AVTD), 109–167 (NGVA…ALSI), and 169–218 (REIW…ALVQ). The disordered stretch occupies residues 432 to 480 (TGAQAGSSAIGPEGLKDSREEQVKQESMQGKKSSSLVDIREEETEGGSR). Basic and acidic residues predominate over residues 445-455 (GLKDSREEQVK). Polar residues predominate over residues 456 to 467 (QESMQGKKSSSL). Serine 465, serine 466, serine 483, and serine 492 each carry phosphoserine. Threonine 510 is modified (phosphothreonine). RCC1 repeat units lie at residues 525-576 (RTEV…ALTA) and 578-627 (SQVY…FLVD). At lysine 533 the chain carries N6-acetyllysine. In terms of domain architecture, DH spans 690-885 (GYIASLHELA…ECLALHLGRK (196 aa)). One can recognise a PH domain in the interval 901-1007 (GKMTDSLRKP…RAISQAVDQA (107 aa)). 8 MORN repeats span residues 1049–1071 (YDGR…DGKM), 1072–1094 (YSGM…NKAM), 1100–1122 (YVGH…SGEV), 1123–1145 (FEGC…KLTS), 1151–1173 (FIGQ…TRGE), 1175–1197 (YMGM…FGLY), 1198–1220 (YEGN…DDTI), and 1221–1244 (YEGE…NGDY). Position 1335 is a phosphoserine (serine 1335). Residues 1513–1657 (KQPDIALLGF…YYQIQREKLN (145 aa)) enclose the VPS9 domain.

As to quaternary structure, forms a heteromeric complex with ALS2CL. Interacts with ALS2CL.

May act as a GTPase regulator. Controls survival and growth of spinal motoneurons. This chain is Alsin (ALS2), found in Homo sapiens (Human).